Here is a 649-residue protein sequence, read N- to C-terminus: Leucine-rich repeat transmembrane protein FLRT3 (649 aa).

A signal peptide spans 1–28 (MISAAWSIFLIGTKIGLFLQVAPLSVMA). The region spanning 29–58 (KSCPSVCRCDAGFIYCNDRFLTSIPTGIPE) is the LRRNT domain. Topologically, residues 29–528 (KSCPSVCRCD…KEPYKNPNLP (500 aa)) are extracellular. Disulfide bonds link C31–C37 and C35–C44. An interaction with ADGRL3 region spans residues 38 to 67 (DAGFIYCNDRFLTSIPTGIPEDATTLYLQN). LRR repeat units lie at residues 59 to 80 (DATT…SDLK), 84 to 104 (KVER…NLPK), 105 to 126 (YVKE…SLSK), 129 to 150 (YLEE…EGAF), 155 to 175 (YLRL…GLPR), 176 to 197 (TIEE…SLQG), 200 to 220 (SLKR…GDKV), 226 to 247 (NLTE…LPGT), 248 to 269 (NLRK…AFSY), and 272 to 293 (QLYR…IFDD). N226 carries N-linked (GlcNAc...) asparagine glycosylation. N-linked (GlcNAc...) asparagine glycosylation is found at N282 and N296. One can recognise an LRRCT domain in the interval 305–357 (NPWYCGCKMKWVRDWLQSLPVKVNVRGLMCQAPEKVRGMAIKDLNAELFDCKD). C309 and C334 form a disulfide bridge. A disordered region spans residues 387-407 (KQPDIKNPKLTKDHQTTGSPS). A compositionally biased stretch (basic and acidic residues) spans 389 to 401 (PDIKNPKLTKDHQ). One can recognise a Fibronectin type-III domain in the interval 409-504 (KTITITVKSV…VCIETETAPL (96 aa)). Residues 529–549 (LAAIIGGAVALVTIALLALVC) form a helical membrane-spanning segment. The Cytoplasmic segment spans residues 550–649 (WYVHRNGSLF…GIPDSDHSHS (100 aa)). Positions 622-649 (LYKNNHSESSSNRSYRDSGIPDSDHSHS) are disordered.

Monomer and homodimer. Self-associates (via leucine-rich repeats), giving rise to homooligomers. Interacts with FGFR1. Interacts (via extracellular domain) with ADGRL1/LPHN1 and LPHN2 (via olfactomedin-like domain). Interacts (via extracellular domain) with ADGRL3 (via olfactomedin-like domain); the interaction is direct. Interacts (via extracellular domain) with UNC5B and UNC5D (via extracellular domain); the interaction is direct. Identified in complexes composed of FLRT3, ADGRL3 and UNC5B, respectively FLRT3, ADGRL3 and UNC5D. May also interact (via extracellular domain) with UNC5A and UNC5C. Interacts (via cytoplasmic domain) with ROBO1. Post-translationally, N-glycosylated. In terms of processing, proteolytic cleavage in the juxtamembrane region gives rise to a soluble ectodomain. Cleavage is probably effected by a metalloprotease. Expressed in kidney, brain, pancreas, skeletal muscle, lung, liver, placenta, and heart.

The protein resides in the cell membrane. It localises to the presynaptic cell membrane. Its subcellular location is the endoplasmic reticulum membrane. The protein localises to the cell junction. It is found in the focal adhesion. The protein resides in the secreted. It localises to the cell projection. Its subcellular location is the axon. The protein localises to the growth cone membrane. In terms of biological role, functions in cell-cell adhesion, cell migration and axon guidance, exerting an attractive or repulsive role depending on its interaction partners. Plays a role in the spatial organization of brain neurons. Plays a role in vascular development in the retina. Plays a role in cell-cell adhesion via its interaction with ADGRL3 and probably also other latrophilins that are expressed at the surface of adjacent cells. Interaction with the intracellular domain of ROBO1 mediates axon attraction towards cells expressing NTN1. Mediates axon growth cone collapse and plays a repulsive role in neuron guidance via its interaction with UNC5B, and possibly also other UNC-5 family members. Promotes neurite outgrowth (in vitro). Mediates cell-cell contacts that promote an increase both in neurite number and in neurite length. Plays a role in the regulation of the density of glutamaergic synapses. Plays a role in fibroblast growth factor-mediated signaling cascades. Required for normal morphogenesis during embryonic development, but not for normal embryonic patterning. Required for normal ventral closure, headfold fusion and definitive endoderm migration during embryonic development. Required for the formation of a normal basement membrane and the maintenance of a normal anterior visceral endoderm during embryonic development. The sequence is that of Leucine-rich repeat transmembrane protein FLRT3 (FLRT3) from Homo sapiens (Human).